Reading from the N-terminus, the 344-residue chain is tRNA N6-adenosine threonylcarbamoyltransferase (344 aa).

Fe cation is bound by residues His-111 and His-115. Substrate is bound by residues 134 to 138 (LVSGG), Asp-167, Gly-180, and Asn-273. Asp-301 lines the Fe cation pocket.

This sequence belongs to the KAE1 / TsaD family. The cofactor is Fe(2+).

It is found in the cytoplasm. The enzyme catalyses L-threonylcarbamoyladenylate + adenosine(37) in tRNA = N(6)-L-threonylcarbamoyladenosine(37) in tRNA + AMP + H(+). Required for the formation of a threonylcarbamoyl group on adenosine at position 37 (t(6)A37) in tRNAs that read codons beginning with adenine. Is involved in the transfer of the threonylcarbamoyl moiety of threonylcarbamoyl-AMP (TC-AMP) to the N6 group of A37, together with TsaE and TsaB. TsaD likely plays a direct catalytic role in this reaction. The protein is tRNA N6-adenosine threonylcarbamoyltransferase of Cupriavidus pinatubonensis (strain JMP 134 / LMG 1197) (Cupriavidus necator (strain JMP 134)).